A 145-amino-acid chain; its full sequence is Large ribosomal subunit protein uL13 (145 aa).

This sequence belongs to the universal ribosomal protein uL13 family. As to quaternary structure, part of the 50S ribosomal subunit.

This protein is one of the early assembly proteins of the 50S ribosomal subunit, although it is not seen to bind rRNA by itself. It is important during the early stages of 50S assembly. The polypeptide is Large ribosomal subunit protein uL13 (Staphylococcus aureus (strain Mu3 / ATCC 700698)).